Consider the following 741-residue polypeptide: Polyribonucleotide nucleotidyltransferase (741 aa).

Positions 489 and 495 each coordinate Mg(2+). One can recognise a KH domain in the interval 556–615; it reads PKIDSIQIPVDKIKVVIGKGGETIDKIIAETGVTIDIDEEGLVQIFSSDQDAIDRAKTII. The S1 motif domain maps to 625-693; it reads GEVYTVPVVR…EKGRVDASIK (69 aa). Residues 695 to 741 form a disordered region; the sequence is LLPKPEKNEDGENGEEHRHCCCSHHKPDHHNESVEAPKKSDESETKE. Composition is skewed to basic and acidic residues over residues 698–713 and 723–741; these read KPEK…EHRH and HHNE…ETKE.

The protein belongs to the polyribonucleotide nucleotidyltransferase family. The cofactor is Mg(2+).

It localises to the cytoplasm. The enzyme catalyses RNA(n+1) + phosphate = RNA(n) + a ribonucleoside 5'-diphosphate. Involved in mRNA degradation. Catalyzes the phosphorolysis of single-stranded polyribonucleotides processively in the 3'- to 5'-direction. The chain is Polyribonucleotide nucleotidyltransferase from Streptococcus thermophilus (strain CNRZ 1066).